The chain runs to 363 residues: Inositol-3-phosphate synthase (363 aa).

Lys65 is covalently cross-linked (Isoglutamyl lysine isopeptide (Lys-Gln) (interchain with Q-Cter in protein Pup)). Residues Asp70, Ala129, Tyr149, Ser192, Asp227, and Lys240 each contribute to the NAD(+) site.

The protein belongs to the myo-inositol 1-phosphate synthase family. Requires NAD(+) as cofactor. In terms of processing, pupylated at Lys-65 by the prokaryotic ubiquitin-like protein Pup, which leads to its degradation by the proteasome.

It carries out the reaction D-glucose 6-phosphate = 1D-myo-inositol 3-phosphate. Key enzyme in myo-inositol biosynthesis pathway that catalyzes the conversion of glucose 6-phosphate to 1D-myo-inositol 3-phosphate in a NAD-dependent manner. In Mycolicibacterium smegmatis (strain ATCC 700084 / mc(2)155) (Mycobacterium smegmatis), this protein is Inositol-3-phosphate synthase (ino1).